The sequence spans 199 residues: MNNFLKHNDWARDPAFNHFWRHYDFSNQWIKQHTDASRQVQMQMVQRDNLSTEQCFSDSEEPEVIERLSRCEIYSEIENEESDIEEMSEEMKAFFAKTQEHRQKLKEQRAAEKRKEGQSSSKSQEEYVNVDKISIRGRIEQSTDHRNASAEFIAKREKAKKDYGESATKILAMESTLAMKFESEYSQNPQLWPNIPFRF.

Residues 72–116 (EIYSEIENEESDIEEMSEEMKAFFAKTQEHRQKLKEQRAAEKRKE) adopt a coiled-coil conformation. A compositionally biased stretch (basic and acidic residues) spans 98–117 (TQEHRQKLKEQRAAEKRKEG). The disordered stretch occupies residues 98 to 127 (TQEHRQKLKEQRAAEKRKEGQSSSKSQEEY).

This is an uncharacterized protein from Caenorhabditis elegans.